The primary structure comprises 188 residues: MKLSVVALAALVSVAAAQGVSELPKCAQDCASKGFPSSCGADVKCVCTSNSFLDAITCCVATTCTAEEQKKTIQFAKGICGGVGVNVPDSAVCPTGGSSSSGSASSTPTSSGGSSSETGSVTGTAITGTNSPTPTSRRPSGSSTAHSSGSGSPATSTGAPTQTGNAAASVNANGGLLAAIAALVIAVA.

Residues 1 to 17 form the signal peptide; sequence MKLSVVALAALVSVAAA. Positions 18–107 constitute a CFEM domain; the sequence is QGVSELPKCA…SSSSGSASST (90 aa). Cystine bridges form between Cys-26–Cys-64, Cys-30–Cys-59, Cys-39–Cys-45, and Cys-47–Cys-80. Asp-42 contributes to the heme binding site. The disordered stretch occupies residues 95-163; it reads TGGSSSSGSA…ATSTGAPTQT (69 aa). The GPI-anchor amidated asparagine moiety is linked to residue Asn-165. A propeptide spans 166-188 (removed in mature form); the sequence is AAASVNANGGLLAAIAALVIAVA.

Belongs to the RBT5 family. The GPI-anchor is attached to the protein in the endoplasmic reticulum and serves to target the protein to the cell surface. There, the glucosamine-inositol phospholipid moiety is cleaved off and the GPI-modified mannoprotein is covalently attached via its lipidless GPI glycan remnant to the 1,6-beta-glucan of the outer cell wall layer.

The protein resides in the secreted. It localises to the cell wall. The protein localises to the cell membrane. In terms of biological role, GPI-anchored cell wall protein involved in stabilizing the cell wall. This chain is GPI-anchored hemophore ARB_01017, found in Arthroderma benhamiae (strain ATCC MYA-4681 / CBS 112371) (Trichophyton mentagrophytes).